Here is a 567-residue protein sequence, read N- to C-terminus: Wee1-like protein kinase 2 (567 aa).

Basic and acidic residues-rich tracts occupy residues 1 to 12 and 26 to 36; these read MDDSSINKELKQ and EGQKEAPESRE. 2 disordered regions span residues 1-103 and 170-191; these read MDDS…DSRS and RSNGKRKTRGDLEEADPGEGKV. At S77 the chain carries Phosphoserine. The short motif at 174–176 is the Nuclear localization signal element; sequence KRK. The Protein kinase domain occupies 215–494; that stretch reads FLEVEKIGVG…ARSRVLRPSL (280 aa). ATP is bound by residues 221 to 229 and K244; that span reads IGVGEFGTV. Residues 318 to 332 carry the Nuclear export signal motif; sequence KLKDILLQISLGLKY. Catalysis depends on D342, which acts as the Proton acceptor. N347 and D384 together coordinate Mg(2+). A coiled-coil region spans residues 497 to 523; sequence AEELQQQLNLEKSKTATLERELREAQQ. The disordered stretch occupies residues 502 to 567; it reads QQLNLEKSKT…SSFTCGKSSP (66 aa). Positions 507–520 are enriched in basic and acidic residues; it reads EKSKTATLERELRE. The segment covering 555 to 567 has biased composition (polar residues); it reads AKSSSFTCGKSSP.

This sequence belongs to the protein kinase superfamily. Ser/Thr protein kinase family. WEE1 subfamily. Phosphorylation leads to increase its activity.

It localises to the nucleus. It catalyses the reaction L-tyrosyl-[protein] + ATP = O-phospho-L-tyrosyl-[protein] + ADP + H(+). Functionally, oocyte-specific protein tyrosine kinase that phosphorylates and inhibits CDK1 and acts as a key regulator of meiosis during both prophase I and metaphase II. Required to maintain meiotic arrest in oocytes during the germinal vesicle (GV) stage, a long period of quiescence at dictyate prophase I, by phosphorylating CDK1 at 'Tyr-15', leading to inhibit CDK1 activity and prevent meiotic reentry. Also required for metaphase II exit during egg activation by phosphorylating CDK1 at 'Tyr-15', to ensure exit from meiosis in oocytes and promote pronuclear formation. This Canis lupus familiaris (Dog) protein is Wee1-like protein kinase 2 (WEE2).